We begin with the raw amino-acid sequence, 607 residues long: Elongation factor 4 (607 aa).

One can recognise a tr-type G domain in the interval 11-193 (EKIRNFSIIA…QIVEKVPAPT (183 aa)). GTP-binding positions include 23 to 28 (DHGKST) and 140 to 143 (NKID).

It belongs to the TRAFAC class translation factor GTPase superfamily. Classic translation factor GTPase family. LepA subfamily.

The protein resides in the cell membrane. The enzyme catalyses GTP + H2O = GDP + phosphate + H(+). Its function is as follows. Required for accurate and efficient protein synthesis under certain stress conditions. May act as a fidelity factor of the translation reaction, by catalyzing a one-codon backward translocation of tRNAs on improperly translocated ribosomes. Back-translocation proceeds from a post-translocation (POST) complex to a pre-translocation (PRE) complex, thus giving elongation factor G a second chance to translocate the tRNAs correctly. Binds to ribosomes in a GTP-dependent manner. This chain is Elongation factor 4, found in Streptococcus pneumoniae (strain Hungary19A-6).